The primary structure comprises 243 residues: Transmembrane protein 176A (243 aa).

S42 bears the Phosphoserine mark. The next 4 membrane-spanning stretches (helical) occupy residues 65–85, 92–112, 122–142, and 204–224; these read WVVQIVLGILSVVLGGILYIC, TQGAPFWTGIVAMLAGAVAFL, ALMRILLVLASFCTAVAAIVI, and LLGVWVLLLLASLIPVCVYLW.

The protein belongs to the TMEM176 family. As to quaternary structure, interacts with MCOLN2.

Its subcellular location is the membrane. In Rattus norvegicus (Rat), this protein is Transmembrane protein 176A (Tmem176a).